Reading from the N-terminus, the 413-residue chain is MGNYYYGGQESRLERISWRMWMVEAACYIVLVLLTLVSSFASLSSTTGFPCFVGTVGESSFGGDLMGHGMTPARRDGVKIFFMSSPSTLFVVFSAVFVWLVVAVYLLLGGVRVKMCNFDSSYGASELSSAVATMTSLVTLSITAWAWQVFVLMLSYRQLTLAAVAFVGIFIAGLVFMLSFASGGKSPENYATFNSQLKTVCKDVHAVITAFKAVVLNLFCVVFGVWHLMLVMLGAVIMVLNFGVSIPKATTGALVVFIVLGLVYLMMIELVVSRYVHVLLGPHLGMIIALGIAGTSALSYAETLDEIMYASWKPVAAGILGAFSVIVLALAVLRAVRSYKFHKAAQSKFLQQVASVAQTVKNRARRERNGPRVHKRYYDAVPVDAYEDDPYRQSPRRSRHGEAEDVIYENMKY.

The Intravirion segment spans residues 1–19 (MGNYYYGGQESRLERISWR). A helical membrane pass occupies residues 20-40 (MWMVEAACYIVLVLLTLVSSF). Topologically, residues 41–88 (ASLSSTTGFPCFVGTVGESSFGGDLMGHGMTPARRDGVKIFFMSSPST) are virion surface. Residues 89 to 109 (LFVVFSAVFVWLVVAVYLLLG) traverse the membrane as a helical segment. Topologically, residues 110–133 (GVRVKMCNFDSSYGASELSSAVAT) are intravirion. The helical transmembrane segment at 134–154 (MTSLVTLSITAWAWQVFVLML) threads the bilayer. Residues 155 to 160 (SYRQLT) lie on the Virion surface side of the membrane. Residues 161–181 (LAAVAFVGIFIAGLVFMLSFA) traverse the membrane as a helical segment. The Intravirion portion of the chain corresponds to 182 to 218 (SGGKSPENYATFNSQLKTVCKDVHAVITAFKAVVLNL). A helical membrane pass occupies residues 219–239 (FCVVFGVWHLMLVMLGAVIMV). Residues 240–251 (LNFGVSIPKATT) are Virion surface-facing. A helical membrane pass occupies residues 252 to 272 (GALVVFIVLGLVYLMMIELVV). Residues 273 to 277 (SRYVH) lie on the Intravirion side of the membrane. A helical membrane pass occupies residues 278-298 (VLLGPHLGMIIALGIAGTSAL). Topologically, residues 299–312 (SYAETLDEIMYASW) are virion surface. A helical membrane pass occupies residues 313–333 (KPVAAGILGAFSVIVLALAVL). Over 334–413 (RAVRSYKFHK…EDVIYENMKY (80 aa)) the chain is Intravirion.

It belongs to the herpesviridae glycoprotein M family. In terms of assembly, interacts (via N-terminus) with gN (via N-terminus). The gM-gN heterodimer forms the gCII complex.

It localises to the virion membrane. The protein resides in the host Golgi apparatus. The protein localises to the host trans-Golgi network. Its subcellular location is the host endosome membrane. It is found in the host nucleus inner membrane. Its function is as follows. Envelope glycoprotein important for virion assembly and egress. Plays a role in the correct incorporation of gH-gL into virion membrane. Directs the glycoprotein N (gN) to the host trans-Golgi network. The protein is Envelope glycoprotein M of Psittacid herpesvirus 1 (isolate Amazon parrot/-/97-0001/1997) (PsHV-1).